A 213-amino-acid polypeptide reads, in one-letter code: Protein Syd (213 aa).

The protein belongs to the Syd family.

Its subcellular location is the cell inner membrane. In terms of biological role, interacts with the SecY protein in vivo. May bind preferentially to an uncomplexed state of SecY, thus functioning either as a chelating agent for excess SecY in the cell or as a regulatory factor that negatively controls the translocase function. The protein is Protein Syd of Shewanella halifaxensis (strain HAW-EB4).